The sequence spans 523 residues: 2-hydroxyisoflavanone synthase (523 aa).

The chain crosses the membrane as a helical span at residues 2 to 22; the sequence is LVELAITLLVIALFIHLRPTP. Residue C450 coordinates heme.

It belongs to the cytochrome P450 family. Requires heme as cofactor.

It is found in the microsome membrane. The enzyme catalyses (2S)-liquiritigenin + reduced [NADPH--hemoprotein reductase] + O2 = (2R,3S)-2,4',7-trihydroxyisoflavanone + oxidized [NADPH--hemoprotein reductase] + H2O + H(+). It carries out the reaction (2S)-naringenin + reduced [NADPH--hemoprotein reductase] + O2 = 2-hydroxy-2,3-dihydrogenistein + oxidized [NADPH--hemoprotein reductase] + H2O + H(+). 2-hydroxyisoflavanone synthase, which catalyzes the hydroxylation associated with 1,2-aryl migration of flavanones. Converts liquiritigenin and naringenin into highly unstable precursors of the isoflavones daidzein and genistein. The polypeptide is 2-hydroxyisoflavanone synthase (CYP93C2) (Glycyrrhiza uralensis (Chinese licorice)).